Reading from the N-terminus, the 276-residue chain is Large ribosomal subunit protein uL2 (276 aa).

Disordered regions lie at residues 14–58 and 219–276; these read RNAS…GGGH and PITR…KNRK. Polar residues predominate over residues 16–27; that stretch reads ASVSDFSELTRS. Over residues 255 to 276 the composition is skewed to basic residues; sequence RRPKKASNKMIVRRRPSGKNRK.

It belongs to the universal ribosomal protein uL2 family. Part of the 50S ribosomal subunit. Forms a bridge to the 30S subunit in the 70S ribosome.

One of the primary rRNA binding proteins. Required for association of the 30S and 50S subunits to form the 70S ribosome, for tRNA binding and peptide bond formation. It has been suggested to have peptidyltransferase activity; this is somewhat controversial. Makes several contacts with the 16S rRNA in the 70S ribosome. In Bifidobacterium longum (strain DJO10A), this protein is Large ribosomal subunit protein uL2.